The chain runs to 1115 residues: MFYPVKVGTRERWSYSRIREVLDMPNLIEIQQNSYQWFLDEGLREMFRDISPIQDFTGNLVLEFIDYSLGEPKYEVEECKERDVTYAAPLRVKVRLINKETGEVKEQEVFMGDFPLMTTKGTFIINGAERVIVSQLVRSPGVYYSESIDPSGKKVFGATVIPNRGAWLEFETDVNDNIFVRVDRTRKLPATVLIRALGYATNGQIAELFDDNEHIRITLERDNTESAEEALVEIYKRLRPGEPPTVDSARSLLEALFFDPKRYDLAKVGRYKLNKKLKLSVPTDVHHLTKEDIVASLRQMLTLMSGEGHKDDIDHLGNRRLRSVGELLQNQFRIGLSRMERVVRERMTIQDVDVITPQVLINIRPVVAAIKEFFGSSQLSQFMDQTNPLAELTHKRRLSALGPGGLSRERAGFEVRDVHHSHYGRMCPIETPEGPNIGLIGSLSTYGRINPYGFIEAPYRKVNNGQVTDQIDYLTADEEEKFVVAQANAPLTDDGHFIEEKIDGRHGPDFVLVAPERIDYMDVSPKQMVSIATALIPFLEHDDANRALMGANMQRQAVPLLRTDAPYVGTGMEYKAAKDSGVCVLASKDGTVERATAEDIIIRHDDGTLEKHKLLKYLRSNQGTCINQRPIVMKNERVEAGQIIADGPSTDHGELALGRNVLIAFMTWEGYNYEDAILISEKLVKEDYYTSIHIEEYEADARDTKLGPEEITRDIPNVGEDVLKDLDERGIIRIGAEVSTGDILVGKVTPKGETELTAEERLLRAIFGEKAREVRDTSLRVPHGEAGKIVDVKVFTRENGDELAPGVNELVRVYIAQKRKISVGDKMAGRHGNKGVISRIMKQEDMPFLPDGTPVEIVLNPLGVPSRMNIGQVMETHLGWAAKALGLRLATPVFDGAQEEDVFATLRKAGLPETGKTVLYDGRTGDPFDNKITVGYMYFLKLHHLVDDKIHARSTGPYSLVTQQPLGGKAQFGGQRFGEMEVWALEAYGAAYTLQEILTVKSDDVVGRVKTYEAIVKGENIPEPGVPESFKVLIKELQSLGLDVRVLSENDEEIEIREIDEDVTETAKELGIDLHEDLPAPVIHEAGEGEDDEYFEEDEEAVDDEPMTFDDDDME.

The segment at 1084–1115 (HEAGEGEDDEYFEEDEEAVDDEPMTFDDDDME) is disordered. Positions 1088–1115 (EGEDDEYFEEDEEAVDDEPMTFDDDDME) are enriched in acidic residues.

It belongs to the RNA polymerase beta chain family. The RNAP catalytic core consists of 2 alpha, 1 beta, 1 beta' and 1 omega subunit. When a sigma factor is associated with the core the holoenzyme is formed, which can initiate transcription.

It carries out the reaction RNA(n) + a ribonucleoside 5'-triphosphate = RNA(n+1) + diphosphate. Its function is as follows. DNA-dependent RNA polymerase catalyzes the transcription of DNA into RNA using the four ribonucleoside triphosphates as substrates. The chain is DNA-directed RNA polymerase subunit beta from Desulfitobacterium hafniense (strain DSM 10664 / DCB-2).